We begin with the raw amino-acid sequence, 124 residues long: V-type proton ATPase subunit F 1 (124 aa).

It belongs to the V-ATPase F subunit family. As to quaternary structure, V-ATPase is a heteromultimeric enzyme made up of two complexes: the ATP-hydrolytic V1 complex and the proton translocation V0 complex. The V1 complex consists of three catalytic AB heterodimers that form a heterohexamer, three peripheral stalks each consisting of EG heterodimers, one central rotor including subunits D and F, and the regulatory subunits C and H. The proton translocation complex V0 consists of the proton transport subunit a, a ring of proteolipid subunits c9c'', rotary subunit d, subunits e and f, and the accessory subunits VhaAC45 and ATP6AP2.

Its function is as follows. Subunit of the V1 complex of vacuolar(H+)-ATPase (V-ATPase), a multisubunit enzyme composed of a peripheral complex (V1) that hydrolyzes ATP and a membrane integral complex (V0) that translocates protons. V-ATPase is responsible for acidifying and maintaining the pH of intracellular compartments and in some cell types, is targeted to the plasma membrane, where it is responsible for acidifying the extracellular environment. This chain is V-type proton ATPase subunit F 1 (Vha14), found in Drosophila pseudoobscura pseudoobscura (Fruit fly).